The chain runs to 685 residues: Polyphosphate kinase (685 aa).

An ATP-binding site is contributed by Asn45. The Mg(2+) site is built by Arg375 and Arg405. His435 functions as the Phosphohistidine intermediate in the catalytic mechanism. ATP is bound by residues Tyr468, Arg564, and His592.

It belongs to the polyphosphate kinase 1 (PPK1) family. It depends on Mg(2+) as a cofactor. In terms of processing, an intermediate of this reaction is the autophosphorylated ppk in which a phosphate is covalently linked to a histidine residue through a N-P bond.

The catalysed reaction is [phosphate](n) + ATP = [phosphate](n+1) + ADP. Catalyzes the reversible transfer of the terminal phosphate of ATP to form a long-chain polyphosphate (polyP). This Neisseria meningitidis serogroup C (strain 053442) protein is Polyphosphate kinase.